The chain runs to 103 residues: MSNQRIRIRLKAFDHRLIDQSTAEIVDTAKRTGAQVRGPIPLPTRKERYTILTSPHVNKDARDQYEIRTHKRMIDIVEPTEKTVDALMRLDLAAGVDVQISLG.

The protein belongs to the universal ribosomal protein uS10 family. Part of the 30S ribosomal subunit.

Its function is as follows. Involved in the binding of tRNA to the ribosomes. This Colwellia psychrerythraea (strain 34H / ATCC BAA-681) (Vibrio psychroerythus) protein is Small ribosomal subunit protein uS10.